The following is a 274-amino-acid chain: RsbT co-antagonist protein RsbRA (274 aa).

The STAS domain maps to 150 to 265 (SAPLIPVFEN…KGIQTALEMT (116 aa)). Phosphothreonine is present on residues Thr171 and Thr205.

As to quaternary structure, interacts with RsbRB and RsbS in the stressosome. The stressosome probably also contains RsbRC and RsbRD. Phosphorylated by RsbT. This threonine phosphorylation abrogates the ability of RsbRA to stimulate RsbT in vitro.

Acts as a positive regulator of sigma-B activity in response to salt and heat stress by stimulating the activity of the RsbT kinase toward RsbS in vitro. Functionally, one of 4 functionally non-identical RsbR paralogs, it functions in the environmental signaling branch of the general stress response. Its function is as follows. Negative regulator of sigma-B activity. Non-phosphorylated RsbS binds to RsbT, preventing its association with RsbU. Requires any one of RsbRA, RsbRB, RsbRC or RsbRD to sequester RsbT. When RsbS and the RsbR paralog(s) are phosphorylated, they release RsbT, which can then bind and activate RsbU. The protein is RsbT co-antagonist protein RsbRA (rsbRA) of Bacillus subtilis (strain 168).